The chain runs to 726 residues: Kinesin-like protein KIN-10B (726 aa).

Disordered stretches follow at residues 1-20 (MEQQQKQEPGGGGGGVRVVA), 60-82 (AATAAASGRGDGPKDKQQQQQQK), and 402-423 (KNARPGFNNSGVKGGQTPTANR). The 345-residue stretch at 15–359 (GVRVVARICP…LALASRSSQV (345 aa)) folds into the Kinesin motor domain. Residues 408–423 (FNNSGVKGGQTPTANR) show a composition bias toward polar residues.

The protein belongs to the TRAFAC class myosin-kinesin ATPase superfamily. Kinesin family. KIN-10 subfamily.

The chain is Kinesin-like protein KIN-10B from Oryza sativa subsp. japonica (Rice).